The sequence spans 425 residues: (S)-6-hydroxynicotine oxidase (425 aa).

FAD contacts are provided by residues serine 12, glutamate 31, 38–39 (GR), and 56–59 (GGAY). A (S)-6-hydroxynicotine-binding site is contributed by asparagine 166. Valine 226 contributes to the FAD binding site. (S)-6-hydroxynicotine is bound by residues tyrosine 311, phenylalanine 326, and tryptophan 371. FAD-binding positions include serine 398 and 406–408 (GYI). A (S)-6-hydroxynicotine-binding site is contributed by tyrosine 407.

It belongs to the flavin monoamine oxidase family. As to quaternary structure, homodimer. FAD is required as a cofactor.

It localises to the cytoplasm. It carries out the reaction (S)-6-hydroxynicotine + O2 + H2O = 6-hydroxypseudooxynicotine + H2O2. The enzyme catalyses (S)-6-hydroxynicotine + O2 = 6-hydroxy-N-methylmyosmine + H2O2. It participates in alkaloid degradation; nicotine degradation; 6-hydroxypseudooxynicotine from nicotine (S-isomer route): step 2/2. Its activity is regulated as follows. Inhibited by (R)-6-hydroxynicotine. Inhibited by high concentrations of phenanthroline. Activity is strongly affected by Hg(2+) and p-chloromercuriphenylsulfonate, but not by N-ethylmaleimide and 5,5'-dithiobis-(2-nitrobenzoate). Functionally, involved in the degradation of L-nicotine. Catalyzes the oxidation of (S)-6-hydroxynicotine (6-hydroxy-L-nicotine) to 6-hydroxypseudooxynicotine. Oxidation of the pyrrolidine ring of (S)-6-hydroxynicotine leads to the formation of the optically inactive 6-hydroxy-N-methylmyosmine, which hydrolyzes spontaneously to 6-hydroxypseudooxynicotine. Acts with absolute stereospecificity on the L-form of 6-hydroxynicotine. Can also use (S)-6-hydroxynornicotine. This Paenarthrobacter nicotinovorans (Arthrobacter nicotinovorans) protein is (S)-6-hydroxynicotine oxidase.